Consider the following 222-residue polypeptide: Sugar fermentation stimulation protein homolog (222 aa).

Belongs to the SfsA family.

This Thermotoga neapolitana (strain ATCC 49049 / DSM 4359 / NBRC 107923 / NS-E) protein is Sugar fermentation stimulation protein homolog.